A 753-amino-acid polypeptide reads, in one-letter code: Cell cycle progression protein 1 (753 aa).

Residues 1–218 are Cytoplasmic-facing; it reads MSESSSDSDS…KRHFSRGLNK (218 aa). The segment at 1-307 is interaction with MCF2L and SRC; it reads MSESSSDSDS…QKKNLAAENQ (307 aa). The tract at residues 57–211 is disordered; that stretch reads HGGEESSANN…EPSKEPSKRH (155 aa). 2 stretches are compositionally biased toward polar residues: residues 62–78 and 122–138; these read SSAN…LSSM and QEVT…LNMG. Residues 176–185 are compositionally biased toward basic residues; that stretch reads PRRRRNRKKT. At Ser-187 the chain carries Phosphoserine. Residues 190 to 201 show a composition bias toward acidic residues; it reads ESEEPPLAEPED. A helical; Signal-anchor for type II membrane protein membrane pass occupies residues 219 to 239; sequence CVILALVIAVSMGFGHFYGTI. Topologically, residues 240 to 753 are lumenal; sequence QIQKQLVRKT…YIKPCYYNSF (514 aa). Residues 298-449 are a coiled coil; sequence QKKNLAAENQ…EQQRSDLWER (152 aa). Over residues 457-467 the composition is skewed to basic and acidic residues; the sequence is QHGKQETDGRK. The tract at residues 457 to 484 is disordered; sequence QHGKQETDGRKRGSRGSHRAKSKSKETF. Residues 468-478 are compositionally biased toward basic residues; it reads RGSRGSHRAKS. Positions 503–529 form a coiled coil; sequence VRHHKEKIKQAKEAVKENLKKFSDSVK. The span at 553-563 shows a compositional bias: basic and acidic residues; that stretch reads APKEAATEKTR. The tract at residues 553 to 606 is disordered; sequence APKEAATEKTRTAYSYSSYSQQEAPNQNQNCRRPSAQRDGGREKPSHSEEIRKN. Polar residues predominate over residues 573 to 584; it reads QQEAPNQNQNCR. A compositionally biased stretch (basic and acidic residues) spans 591–605; the sequence is DGGREKPSHSEEIRK.

The protein belongs to the CCPG1 family. In terms of assembly, interacts with MCF2L. May interact with MCF2, ARHGEF1, BCR, VAV1 and FGD1, but not with TIAM1. Interacts with GTP-bound CDC42 and SRC.

The protein localises to the cytoplasmic granule membrane. Acts as an assembly platform for Rho protein signaling complexes. Limits guanine nucleotide exchange activity of MCF2L toward RHOA, which results in an inhibition of both its transcriptional activation ability and its transforming activity. Does not inhibit activity of MCF2L toward CDC42, or activity of MCF2 toward either RHOA or CDC42. May be involved in cell cycle regulation. This Mus musculus (Mouse) protein is Cell cycle progression protein 1 (Ccpg1).